The following is a 246-amino-acid chain: MLRTARFLQRSISATSRPNCIVQPQRTSATCPRSFILQHTEATSDPLTPEIRLRLLTPRCDFWRQKPELWPYGDPYWAIYWPGGQALSRFLLDNPQIVRGGRVLDLGCGCGAAAIAAWMGGASYVLANDIDPVAGEAFRLNCELNNMKPLDFQAENLIGRETGPWSLIVLGDMFYDAELADLLCDWLRRSIRSHGTKVLIGDPGRAQFSSHPVLRHLQPLAQYSLSDSTKEENYGLTDSTVWSFEP.

Belongs to the methyltransferase superfamily. ETFBKMT family.

It localises to the cytoplasm. The protein localises to the mitochondrion matrix. It catalyses the reaction L-lysyl-[protein] + 3 S-adenosyl-L-methionine = N(6),N(6),N(6)-trimethyl-L-lysyl-[protein] + 3 S-adenosyl-L-homocysteine + 3 H(+). Protein-lysine methyltransferase that selectively trimethylates the flavoprotein ETFB in mitochondria. Thereby, may negatively regulate the function of ETFB in electron transfer from Acyl-CoA dehydrogenases to the main respiratory chain. The chain is Electron transfer flavoprotein beta subunit lysine methyltransferase (etfbkmt) from Xenopus laevis (African clawed frog).